The sequence spans 876 residues: Bifunctional uridylyltransferase/uridylyl-removing enzyme (876 aa).

The segment at 1–332 (MPYQSPITFQ…NNGEEAEAVI (332 aa)) is uridylyltransferase. A uridylyl-removing region spans residues 333–692 (IDDDFQRRGN…LSKKATRGGT (360 aa)). One can recognise an HD domain in the interval 451 to 573 (VDEHSIRLLK…VRDEERLEYL (123 aa)). ACT domains follow at residues 693–777 (EVFI…RIPR) and 800–876 (LMEF…PSAQ).

The protein belongs to the GlnD family. Mg(2+) serves as cofactor.

The enzyme catalyses [protein-PII]-L-tyrosine + UTP = [protein-PII]-uridylyl-L-tyrosine + diphosphate. It catalyses the reaction [protein-PII]-uridylyl-L-tyrosine + H2O = [protein-PII]-L-tyrosine + UMP + H(+). With respect to regulation, uridylyltransferase (UTase) activity is inhibited by glutamine, while glutamine activates uridylyl-removing (UR) activity. Modifies, by uridylylation and deuridylylation, the PII regulatory proteins (GlnB and homologs), in response to the nitrogen status of the cell that GlnD senses through the glutamine level. Under low glutamine levels, catalyzes the conversion of the PII proteins and UTP to PII-UMP and PPi, while under higher glutamine levels, GlnD hydrolyzes PII-UMP to PII and UMP (deuridylylation). Thus, controls uridylylation state and activity of the PII proteins, and plays an important role in the regulation of nitrogen assimilation and metabolism. This Vibrio cholerae serotype O1 (strain ATCC 39315 / El Tor Inaba N16961) protein is Bifunctional uridylyltransferase/uridylyl-removing enzyme.